The primary structure comprises 423 residues: ATP-dependent RNA helicase RhlB (423 aa).

Residues 9-37 (LRFSDLPLHHQVLAALQEKGFDYCTPIQA) carry the Q motif motif. The region spanning 40 to 217 (LPMSLAGKDV…FEDMNDPEYV (178 aa)) is the Helicase ATP-binding domain. ATP is bound at residue 53 to 60 (AQTGTGKT). The DEAD box signature appears at 163-166 (DEAD). The Helicase C-terminal domain occupies 241–388 (KMALLLTLLE…VSQYDVAALL (148 aa)). The disordered stretch occupies residues 397–423 (KRGNNNSKNSANSNRTFQKKRSLKRNF). Over residues 400–410 (NNNSKNSANSN) the composition is skewed to low complexity. The span at 413-423 (FQKKRSLKRNF) shows a compositional bias: basic residues.

It belongs to the DEAD box helicase family. RhlB subfamily. As to quaternary structure, component of the RNA degradosome, which is a multiprotein complex involved in RNA processing and mRNA degradation.

The protein resides in the cytoplasm. It carries out the reaction ATP + H2O = ADP + phosphate + H(+). DEAD-box RNA helicase involved in RNA degradation. Has RNA-dependent ATPase activity and unwinds double-stranded RNA. This is ATP-dependent RNA helicase RhlB from Pasteurella multocida (strain Pm70).